The following is a 236-amino-acid chain: Ribonuclease 3 (236 aa).

In terms of domain architecture, RNase III spans 7–136 (KSYILKKFNI…FIGALYLDQG (130 aa)). Glu49 provides a ligand contact to Mg(2+). The active site involves Asp53. Asp122 and Glu125 together coordinate Mg(2+). The active site involves Glu125. A DRBM domain is found at 162 to 232 (DFKSRLQERL…ARAALKILED (71 aa)).

The protein belongs to the ribonuclease III family. Homodimer. The cofactor is Mg(2+).

The protein localises to the cytoplasm. The enzyme catalyses Endonucleolytic cleavage to 5'-phosphomonoester.. Digests double-stranded RNA. Involved in the processing of primary rRNA transcript to yield the immediate precursors to the large and small rRNAs (23S and 16S). Processes some mRNAs, and tRNAs when they are encoded in the rRNA operon. Processes pre-crRNA and tracrRNA of type II CRISPR loci if present in the organism. The polypeptide is Ribonuclease 3 (Leuconostoc mesenteroides subsp. mesenteroides (strain ATCC 8293 / DSM 20343 / BCRC 11652 / CCM 1803 / JCM 6124 / NCDO 523 / NBRC 100496 / NCIMB 8023 / NCTC 12954 / NRRL B-1118 / 37Y)).